The following is a 206-amino-acid chain: Small ribosomal subunit protein uS4 (206 aa).

Residues 96–157 enclose the S4 RNA-binding domain; it reads SRLDNVVYRM…KAKNQARIQN (62 aa).

It belongs to the universal ribosomal protein uS4 family. As to quaternary structure, part of the 30S ribosomal subunit. Contacts protein S5. The interaction surface between S4 and S5 is involved in control of translational fidelity.

Functionally, one of the primary rRNA binding proteins, it binds directly to 16S rRNA where it nucleates assembly of the body of the 30S subunit. Its function is as follows. With S5 and S12 plays an important role in translational accuracy. The chain is Small ribosomal subunit protein uS4 from Chromohalobacter salexigens (strain ATCC BAA-138 / DSM 3043 / CIP 106854 / NCIMB 13768 / 1H11).